Reading from the N-terminus, the 513-residue chain is ATP synthase subunit alpha (513 aa).

169–176 is a binding site for ATP; the sequence is GDRQTGKT.

Belongs to the ATPase alpha/beta chains family. F-type ATPases have 2 components, CF(1) - the catalytic core - and CF(0) - the membrane proton channel. CF(1) has five subunits: alpha(3), beta(3), gamma(1), delta(1), epsilon(1). CF(0) has three main subunits: a(1), b(2) and c(9-12). The alpha and beta chains form an alternating ring which encloses part of the gamma chain. CF(1) is attached to CF(0) by a central stalk formed by the gamma and epsilon chains, while a peripheral stalk is formed by the delta and b chains.

Its subcellular location is the cell inner membrane. It catalyses the reaction ATP + H2O + 4 H(+)(in) = ADP + phosphate + 5 H(+)(out). Produces ATP from ADP in the presence of a proton gradient across the membrane. The alpha chain is a regulatory subunit. This is ATP synthase subunit alpha from Methylobacillus flagellatus (strain ATCC 51484 / DSM 6875 / VKM B-1610 / KT).